The following is a 303-amino-acid chain: ATP synthase gamma chain (303 aa).

This sequence belongs to the ATPase gamma chain family. In terms of assembly, F-type ATPases have 2 components, CF(1) - the catalytic core - and CF(0) - the membrane proton channel. CF(1) has five subunits: alpha(3), beta(3), gamma(1), delta(1), epsilon(1). CF(0) has three main subunits: a, b and c.

The protein localises to the cell inner membrane. Functionally, produces ATP from ADP in the presence of a proton gradient across the membrane. The gamma chain is believed to be important in regulating ATPase activity and the flow of protons through the CF(0) complex. This chain is ATP synthase gamma chain, found in Bartonella quintana (strain Toulouse) (Rochalimaea quintana).